Reading from the N-terminus, the 188-residue chain is MLVKTALFVTLIGLAQAGPLPAKSSGSEDTYDSHPQYSFNYDVQDPETGDVKSQSESRDGDVVHGQYSVNDADGYRRTVDYTADDVRGFNAVVRREPLSSAAVVVKPQATAVVPKVQLKPLKKLPALKPLSQASAVVHRSFAPVVHHAPVTHVVHHAAPAHSFVSHHVPVLKTTVHHAHHPHAISYVF.

An N-terminal signal peptide occupies residues 1–17; that stretch reads MLVKTALFVTLIGLAQA. The disordered stretch occupies residues 19–67; it reads PLPAKSSGSEDTYDSHPQYSFNYDVQDPETGDVKSQSESRDGDVVHGQY. The segment covering 24 to 41 has biased composition (polar residues); the sequence is SSGSEDTYDSHPQYSFNY. The Chitin-binding type R&amp;R domain occupies 34 to 100; sequence HPQYSFNYDV…AVVRREPLSS (67 aa). The span at 49–62 shows a compositional bias: basic and acidic residues; the sequence is GDVKSQSESRDGDV.

In terms of tissue distribution, imaginal (anterior) epidermis.

In terms of biological role, component of the cuticle of the pupa of fruit fly. The protein is Pupal cuticle protein Edg-84A (Edg84A) of Drosophila melanogaster (Fruit fly).